Consider the following 150-residue polypeptide: Ribosome-binding factor A (150 aa).

Residues 126-150 are disordered; it reads EVARDLSHDDDEDGGADEAPRNGDE.

It belongs to the RbfA family. In terms of assembly, monomer. Binds 30S ribosomal subunits, but not 50S ribosomal subunits or 70S ribosomes.

The protein localises to the cytoplasm. One of several proteins that assist in the late maturation steps of the functional core of the 30S ribosomal subunit. Associates with free 30S ribosomal subunits (but not with 30S subunits that are part of 70S ribosomes or polysomes). Required for efficient processing of 16S rRNA. May interact with the 5'-terminal helix region of 16S rRNA. This Brucella suis (strain ATCC 23445 / NCTC 10510) protein is Ribosome-binding factor A.